The chain runs to 234 residues: 2,3,4,5-tetrahydropyridine-2,6-dicarboxylate N-acetyltransferase (234 aa).

Belongs to the transferase hexapeptide repeat family. DapH subfamily.

It catalyses the reaction (S)-2,3,4,5-tetrahydrodipicolinate + acetyl-CoA + H2O = L-2-acetamido-6-oxoheptanedioate + CoA. It functions in the pathway amino-acid biosynthesis; L-lysine biosynthesis via DAP pathway; LL-2,6-diaminopimelate from (S)-tetrahydrodipicolinate (acetylase route): step 1/3. Its function is as follows. Catalyzes the transfer of an acetyl group from acetyl-CoA to tetrahydrodipicolinate. The sequence is that of 2,3,4,5-tetrahydropyridine-2,6-dicarboxylate N-acetyltransferase from Lacticaseibacillus paracasei (strain ATCC 334 / BCRC 17002 / CCUG 31169 / CIP 107868 / KCTC 3260 / NRRL B-441) (Lactobacillus paracasei).